The following is a 436-amino-acid chain: Methylenetetrahydrofolate--tRNA-(uracil-5-)-methyltransferase TrmFO (436 aa).

FAD is bound at residue 11 to 16 (GAGLAG).

This sequence belongs to the MnmG family. TrmFO subfamily. FAD serves as cofactor.

Its subcellular location is the cytoplasm. The catalysed reaction is uridine(54) in tRNA + (6R)-5,10-methylene-5,6,7,8-tetrahydrofolate + NADH + H(+) = 5-methyluridine(54) in tRNA + (6S)-5,6,7,8-tetrahydrofolate + NAD(+). It catalyses the reaction uridine(54) in tRNA + (6R)-5,10-methylene-5,6,7,8-tetrahydrofolate + NADPH + H(+) = 5-methyluridine(54) in tRNA + (6S)-5,6,7,8-tetrahydrofolate + NADP(+). Its function is as follows. Catalyzes the folate-dependent formation of 5-methyl-uridine at position 54 (M-5-U54) in all tRNAs. In Shouchella clausii (strain KSM-K16) (Alkalihalobacillus clausii), this protein is Methylenetetrahydrofolate--tRNA-(uracil-5-)-methyltransferase TrmFO.